The primary structure comprises 262 residues: 2-aminoethylphosphonate dioxygenase (262 aa).

Lys108 lines the 2-oxoglutarate pocket. Fe cation is bound by residues His118, Asp120, and His198.

Belongs to the PhyH family. Fe(2+) serves as cofactor.

It carries out the reaction (2-aminoethyl)phosphonate + 2-oxoglutarate + O2 = (1R)-(2-amino-1-hydroxyethyl)phosphonate + succinate + CO2. Its activity is regulated as follows. Activity is enhanced by ascorbate. Functionally, involved in the degradation of the organophosphonate 2-aminoethylphosphonic acid (2-AEP). Catalyzes the hydroxylation of 2-aminoethylphosphonic acid to yield (2-amino-1-hydroxyethyl)phosphonic acid. The polypeptide is 2-aminoethylphosphonate dioxygenase (Uncultured bacterium HF130_AEPn_1).